We begin with the raw amino-acid sequence, 508 residues long: Bifunctional purine biosynthesis protein PurH (508 aa).

Residues 1–144 (MTRALLSVSD…KNFASVLPIV (144 aa)) enclose the MGS-like domain.

This sequence belongs to the PurH family.

It catalyses the reaction (6R)-10-formyltetrahydrofolate + 5-amino-1-(5-phospho-beta-D-ribosyl)imidazole-4-carboxamide = 5-formamido-1-(5-phospho-D-ribosyl)imidazole-4-carboxamide + (6S)-5,6,7,8-tetrahydrofolate. It carries out the reaction IMP + H2O = 5-formamido-1-(5-phospho-D-ribosyl)imidazole-4-carboxamide. It functions in the pathway purine metabolism; IMP biosynthesis via de novo pathway; 5-formamido-1-(5-phospho-D-ribosyl)imidazole-4-carboxamide from 5-amino-1-(5-phospho-D-ribosyl)imidazole-4-carboxamide (10-formyl THF route): step 1/1. Its pathway is purine metabolism; IMP biosynthesis via de novo pathway; IMP from 5-formamido-1-(5-phospho-D-ribosyl)imidazole-4-carboxamide: step 1/1. In Leuconostoc mesenteroides subsp. mesenteroides (strain ATCC 8293 / DSM 20343 / BCRC 11652 / CCM 1803 / JCM 6124 / NCDO 523 / NBRC 100496 / NCIMB 8023 / NCTC 12954 / NRRL B-1118 / 37Y), this protein is Bifunctional purine biosynthesis protein PurH.